Here is a 968-residue protein sequence, read N- to C-terminus: RNA polymerase-associated protein RapA (968 aa).

Positions 164-334 (DVGRRHAPRV…FARLRLLDPN (171 aa)) constitute a Helicase ATP-binding domain. Position 177–184 (177–184 (DEVGLGKT)) interacts with ATP. Residues 280–283 (DEAH) carry the DEAH box motif. In terms of domain architecture, Helicase C-terminal spans 490–662 (RVEWLMGYLT…YLASPDQTEG (173 aa)).

It belongs to the SNF2/RAD54 helicase family. RapA subfamily. In terms of assembly, interacts with the RNAP. Has a higher affinity for the core RNAP than for the holoenzyme. Its ATPase activity is stimulated by binding to RNAP.

Functionally, transcription regulator that activates transcription by stimulating RNA polymerase (RNAP) recycling in case of stress conditions such as supercoiled DNA or high salt concentrations. Probably acts by releasing the RNAP, when it is trapped or immobilized on tightly supercoiled DNA. Does not activate transcription on linear DNA. Probably not involved in DNA repair. In Shigella boydii serotype 18 (strain CDC 3083-94 / BS512), this protein is RNA polymerase-associated protein RapA.